Consider the following 777-residue polypeptide: Ral guanine nucleotide dissociation stimulator-like 2 (777 aa).

Positions 1 to 54 (MLPRPLRLLLDTSPPGGVVLSSFRSRDPEEGGGPGGLVVGGGQEEEEEEEEEAP) are disordered. Phosphoserine is present on S13. The span at 31 to 42 (GGGPGGLVVGGG) shows a compositional bias: gly residues. Over residues 43–54 (QEEEEEEEEEAP) the composition is skewed to acidic residues. The N-terminal Ras-GEF domain maps to 88–212 (SSRRLRAGTL…GSADLIRNLR (125 aa)). One can recognise a Ras-GEF domain in the interval 243–513 (LADHLAEQLT…HRVSCEVEPP (271 aa)). A Phosphoserine modification is found at S409. Composition is skewed to low complexity over residues 581–610 (SLDSALESSPSLHSPADPSHLSPPASSPRP) and 618–632 (ASCGSPLSGGAEEAS). 2 disordered regions span residues 581 to 644 (SLDS…GSGP) and 734 to 766 (RRSSTATPGVTSGPSASGTPPSEGGGGSFPRIK). Residues 633-644 (GGTGYGGEGSGP) show a composition bias toward gly residues. The Ras-associating domain occupies 648 to 735 (DCRIIRVQME…HDFLLRQRRR (88 aa)). A compositionally biased stretch (low complexity) spans 740-755 (TPGVTSGPSASGTPPS).

In terms of assembly, interacts with SAMD9.

Probable guanine nucleotide exchange factor. Putative effector of Ras and/or Rap. Associates with the GTP-bound form of Rap 1A and H-Ras in vitro. This is Ral guanine nucleotide dissociation stimulator-like 2 (RGL2) from Homo sapiens (Human).